A 343-amino-acid polypeptide reads, in one-letter code: UDP-3-O-(3-hydroxymyristoyl)glucosamine N-acyltransferase (343 aa).

His239 acts as the Proton acceptor in catalysis.

It belongs to the transferase hexapeptide repeat family. LpxD subfamily. Homotrimer.

It carries out the reaction a UDP-3-O-[(3R)-3-hydroxyacyl]-alpha-D-glucosamine + a (3R)-hydroxyacyl-[ACP] = a UDP-2-N,3-O-bis[(3R)-3-hydroxyacyl]-alpha-D-glucosamine + holo-[ACP] + H(+). It catalyses the reaction UDP-3-O-[(3R)-3-hydroxytetradecanoyl]-alpha-D-glucosamine + (3R)-hydroxytetradecanoyl-[ACP] = UDP-2-N,3-O-bis[(3R)-3-hydroxytetradecanoyl]-alpha-D-glucosamine + holo-[ACP] + H(+). The protein operates within glycolipid biosynthesis; lipid IV(A) biosynthesis; lipid IV(A) from (3R)-3-hydroxytetradecanoyl-[acyl-carrier-protein] and UDP-N-acetyl-alpha-D-glucosamine: step 3/6. Catalyzes the N-acylation of UDP-3-O-(hydroxytetradecanoyl)glucosamine using 3-hydroxytetradecanoyl-ACP as the acyl donor. Is involved in the biosynthesis of lipid A, a phosphorylated glycolipid that anchors the lipopolysaccharide to the outer membrane of the cell. The polypeptide is UDP-3-O-(3-hydroxymyristoyl)glucosamine N-acyltransferase (Blochmanniella pennsylvanica (strain BPEN)).